The following is a 210-amino-acid chain: Prolactin-2 (210 aa).

Residues 1–23 (MARRSQGTKLHLAVLCLVVSCHA) form the signal peptide. Disulfide bonds link Cys-69/Cys-183 and Cys-200/Cys-210.

The protein belongs to the somatotropin/prolactin family.

It localises to the secreted. The chain is Prolactin-2 (prl2) from Oncorhynchus tshawytscha (Chinook salmon).